We begin with the raw amino-acid sequence, 416 residues long: MSLSNKLSITDVDLKGKRVLIRVDFNVPLDENKKITNNQRIVGAIPTIKHALDNGAKAVVLMSHLGRPNGAVNPKYSLKPVVPELERLLGKPVTFARDCVGPEVESIVNDADNGAVILLENLRFHIEEEGSAKDKDGNKTKADKAKVEEFRKGLTALGDIYINDAFGTAHRAHSSMVGVDLPQKAAGFLMKKELDYFAKALESPQRPFLAILGGAKVSDKIQLIDNLLDKVDTLIVCGGMAFTFKKVLNNIPIGTSLFDEAGAKTCPSCREAKAKNVKLVLPVDYITADKFDKDANTGTATDESGIPDGWMGLDCGEKSIELYKEAIADAKTILWNGPAGVFEFDKFANGTKATLDAVVEGCKNGKIVIIGGGDTATVAAKYGVEDKLSHVSTGGGASLELLEGKELPGVVALSSK.

Positions 23, 24, 25, 26, 39, 40, 63, 64, 66, 67, 122, 123, 170, and 171 each coordinate (2R)-3-phosphoglycerate. G214 serves as a coordination point for ADP. Residue G214 participates in CDP binding. AMP contacts are provided by A215 and K216. A215 provides a ligand contact to ATP. Mg(2+) is bound at residue A215. D219 is a binding site for CDP. D219 is a binding site for Mg(2+). Residue K220 coordinates AMP. K220 contributes to the ATP binding site. G238 is an ADP binding site. Residue G238 coordinates CDP. Residues G239 and G312 each contribute to the AMP site. Residues G239 and G312 each coordinate ATP. 3 residues coordinate CDP: G337, A339, and F342. ADP is bound at residue F342. E343 is a binding site for AMP. Residues E343, D374, and T375 each contribute to the ATP site. Position 374 (D374) interacts with Mg(2+).

The protein belongs to the phosphoglycerate kinase family. As to quaternary structure, monomer. Mg(2+) serves as cofactor.

It is found in the cytoplasm. Its subcellular location is the mitochondrion. It carries out the reaction (2R)-3-phosphoglycerate + ATP = (2R)-3-phospho-glyceroyl phosphate + ADP. Its pathway is carbohydrate degradation; glycolysis; pyruvate from D-glyceraldehyde 3-phosphate: step 2/5. Functionally, catalyzes one of the two ATP producing reactions in the glycolytic pathway via the reversible conversion of 1,3-diphosphoglycerate to 3-phosphoglycerate. Both L- and D- forms of purine and pyrimidine nucleotides can be used as substrates, but the activity is much lower on pyrimidines. Negatively regulates the biosynthesis of acetyl-CoA from pyruvate in the mitochondrion. The protein is Phosphoglycerate kinase (pgk1) of Hypocrea jecorina (Trichoderma reesei).